The primary structure comprises 141 residues: Hemoglobin D subunit alpha (141 aa).

Residues 1–141 (MLTEDDKQLI…VSAVLAEKYR (141 aa)) form the Globin domain. H58 contributes to the O2 binding site. Residue H87 participates in heme b binding.

The protein belongs to the globin family. Tetramer of two alpha chains and two beta chains. As to expression, red blood cells.

In terms of biological role, involved in oxygen transport from the lung to the various peripheral tissues. The chain is Hemoglobin D subunit alpha from Aldabrachelys gigantea (Aldabra giant tortoise).